A 530-amino-acid polypeptide reads, in one-letter code: uncharacterized protein (530 aa).

This sequence belongs to the protein kinase superfamily. ADCK protein kinase family.

This is an uncharacterized protein from Clostridium pasteurianum.